A 124-amino-acid chain; its full sequence is MAPTAQVAKKGSKKAVKGTKTAXGGKKRNRKRKESYGIYIYKVLKQVHPDTGISSRAMVIMNSFVNDIFERIAGESSRLAQYNKKSTISSREIQTAVRLILPGELAKHAVSEGTKAVTKYTTSK.

The tract at residues 1–31 (MAPTAQVAKKGSKKAVKGTKTAXGGKKRNRK) is disordered. S111 carries O-linked (GlcNAc) serine glycosylation. K119 is covalently cross-linked (Glycyl lysine isopeptide (Lys-Gly) (interchain with G-Cter in ubiquitin)).

Belongs to the histone H2B family. As to quaternary structure, the nucleosome is a histone octamer containing two molecules each of H2A, H2B, H3 and H4 assembled in one H3-H4 heterotetramer and two H2A-H2B heterodimers. The octamer wraps approximately 147 bp of DNA. Post-translationally, monoubiquitination of Lys-119 gives a specific tag for epigenetic transcriptional activation and is also prerequisite for histone H3 'Lys-4' and 'Lys-79' methylation. GlcNAcylation at Ser-111 promotes monoubiquitination of Lys-119. It fluctuates in response to extracellular glucose, and associates with transcribed genes.

It localises to the nucleus. It is found in the chromosome. Functionally, core component of nucleosome. Nucleosomes wrap and compact DNA into chromatin, limiting DNA accessibility to the cellular machineries which require DNA as a template. Histones thereby play a central role in transcription regulation, DNA repair, DNA replication and chromosomal stability. DNA accessibility is regulated via a complex set of post-translational modifications of histones, also called histone code, and nucleosome remodeling. In Strongylocentrotus purpuratus (Purple sea urchin), this protein is Histone H2B, embryonic.